The primary structure comprises 173 residues: Ribosome maturation factor RimM (173 aa).

The region spanning 95–173 is the PRC barrel domain; the sequence is EGEYYWRQLE…LMVVDWDPDF (79 aa).

This sequence belongs to the RimM family. Binds ribosomal protein uS19.

It localises to the cytoplasm. Functionally, an accessory protein needed during the final step in the assembly of 30S ribosomal subunit, possibly for assembly of the head region. Essential for efficient processing of 16S rRNA. May be needed both before and after RbfA during the maturation of 16S rRNA. It has affinity for free ribosomal 30S subunits but not for 70S ribosomes. The protein is Ribosome maturation factor RimM of Hahella chejuensis (strain KCTC 2396).